A 1055-amino-acid chain; its full sequence is Vacuolar protein sorting-associated protein 54 (1055 aa).

Residues 363–383 (TKKIIEVHQKYEQKKHLLAKL) adopt a coiled-coil conformation. Residues 774-794 (IDDGPTKKPFKRTGSSATIDS) are disordered.

It belongs to the VPS54 family. Component of the Golgi-associated retrograde protein (GARP) complex, also called VFT (VPS fifty-three) complex, composed of VPS51, VPS52, VPS53 and VPS54.

The protein localises to the golgi apparatus. Its subcellular location is the trans-Golgi network. Acts as a component of the GARP complex that is involved in retrograde transport from early and late endosomes to the trans-Golgi network (TGN). The GARP complex facilitates tethering as well as SNARE complex assembly at the Golgi. The polypeptide is Vacuolar protein sorting-associated protein 54 (vps-54) (Caenorhabditis briggsae).